The sequence spans 418 residues: METLGLPLPLFEKILFRLDPISLVMMKCTRRSFNSHISEDPYFKSKYLSGVRSGLLHISSFGSKNLFCNPFGDSSSSRHHDFLDITTRILGSCSGLLLLFIDGLCVANPLTKRYRFLNYSKSMFLSRVDRWGILNFDLPSEKMNRLGLAVDQITQRFKVVCMNETETSDPDETMYQFEILTGDSCWRLSATTITCSASVLIMDKKPVYFDGSVHWLRKDGSILSFNPETEQARLIPIKFPLELCAVANKFLFSATEKELAFISATEDLINVYALENALIDPKWALVKQIKNGVSENKKIRYWNVAAYDGKYLVLWEMYKDIYNGVVHGYDLRANKWGVLGSVPSWCDCSHSFYNFTPSPFSSTIELNKKVDVRMITTVRDDYNVRMITMVRDDKHISTLKKIMKLTDEISPCAKSRWH.

The F-box domain occupies M1–K46.

This Arabidopsis thaliana (Mouse-ear cress) protein is Putative F-box protein At1g20795.